The following is a 37-amino-acid chain: Cytochrome b6-f complex subunit 5 (37 aa).

The helical transmembrane segment at 5–25 threads the bilayer; it reads FLLGIILGLIPITLIGLFVTA.

The protein belongs to the PetG family. The 4 large subunits of the cytochrome b6-f complex are cytochrome b6, subunit IV (17 kDa polypeptide, PetD), cytochrome f and the Rieske protein, while the 4 small subunits are PetG, PetL, PetM and PetN. The complex functions as a dimer.

It localises to the plastid membrane. Component of the cytochrome b6-f complex, which mediates electron transfer between photosystem II (PSII) and photosystem I (PSI), cyclic electron flow around PSI, and state transitions. PetG is required for either the stability or assembly of the cytochrome b6-f complex. The sequence is that of Cytochrome b6-f complex subunit 5 from Cuscuta obtusiflora (Peruvian dodder).